Consider the following 139-residue polypeptide: uncharacterized protein (139 aa).

Positions 9-133 (QAAQIRIARP…DGWRIVFMNS (125 aa)) constitute a VOC domain.

This is an uncharacterized protein from Bacillus subtilis (strain 168).